Reading from the N-terminus, the 313-residue chain is MATKINKAIKISQKHLLGIQDLSINDVNFILEEAKSFIKLNQSKNKRLNVLSGKTQINLFFEPSTRTQSSFELAGKRLGADVMSMNMANSAIKKGETLIDTAMTLNAMHPDIIVIRHQDSGACNLLSQKVNCAVLNAGDGSREHPTQALLDALTIINRKKKIEGLRVAICGDITHSRVARSNIYLLNMLGAEVNIIAPSNLMPKEIEKFGVNTFTDMKKGLKDCDIVMMLRLQNERMTSSFLSSNREYYEYYGLTPDKLAHAKDDALIMHPGPMNRGIEIDTKLADDINRSVIKEQVELGVAVRMACLKIFCE.

2 residues coordinate carbamoyl phosphate: Arg66 and Thr67. L-aspartate is bound at residue Lys94. Residues Arg116, His144, and Gln147 each contribute to the carbamoyl phosphate site. L-aspartate-binding residues include Arg177 and Arg231. Residues Gly272 and Pro273 each contribute to the carbamoyl phosphate site.

Belongs to the aspartate/ornithine carbamoyltransferase superfamily. ATCase family. In terms of assembly, heterododecamer (2C3:3R2) of six catalytic PyrB chains organized as two trimers (C3), and six regulatory PyrI chains organized as three dimers (R2).

It carries out the reaction carbamoyl phosphate + L-aspartate = N-carbamoyl-L-aspartate + phosphate + H(+). It functions in the pathway pyrimidine metabolism; UMP biosynthesis via de novo pathway; (S)-dihydroorotate from bicarbonate: step 2/3. Catalyzes the condensation of carbamoyl phosphate and aspartate to form carbamoyl aspartate and inorganic phosphate, the committed step in the de novo pyrimidine nucleotide biosynthesis pathway. In Pelagibacter ubique (strain HTCC1062), this protein is Aspartate carbamoyltransferase catalytic subunit.